Consider the following 114-residue polypeptide: Large ribosomal subunit protein P2 (114 aa).

The segment at 84-114 (TDALQAGSKKGETKEGPKEESDEDMGFGLFD) is disordered. Basic and acidic residues predominate over residues 92-102 (KKGETKEGPKE).

The protein belongs to the eukaryotic ribosomal protein P1/P2 family. P1 and P2 exist as dimers at the large ribosomal subunit. Phosphorylated.

In terms of biological role, plays an important role in the elongation step of protein synthesis. The chain is Large ribosomal subunit protein P2 (rpp-2) from Brugia malayi (Filarial nematode worm).